The primary structure comprises 198 residues: Molybdopterin synthase catalytic subunit (198 aa).

Residues 107–108, K123, and 130–132 contribute to the substrate site; these read HR and KKE.

This sequence belongs to the MoaE family. MOCS2B subfamily. As to quaternary structure, heterotetramer; composed of 2 small (MOCS2A) and 2 large (MOCS2B) subunits.

The protein resides in the cytoplasm. It catalyses the reaction 2 [molybdopterin-synthase sulfur-carrier protein]-C-terminal-Gly-aminoethanethioate + cyclic pyranopterin phosphate + H2O = molybdopterin + 2 [molybdopterin-synthase sulfur-carrier protein]-C-terminal Gly-Gly + 2 H(+). It functions in the pathway cofactor biosynthesis; molybdopterin biosynthesis. Its function is as follows. Catalytic subunit of the molybdopterin synthase complex, a complex that catalyzes the conversion of precursor Z into molybdopterin. Acts by mediating the incorporation of 2 sulfur atoms from thiocarboxylated MOCS2A into precursor Z to generate a dithiolene group. This Arabidopsis thaliana (Mouse-ear cress) protein is Molybdopterin synthase catalytic subunit.